The chain runs to 213 residues: MRIILLGAPGSGKGTQAQFIMKKYGIPHISTGDMLRTTVNKESVLGKNIQAIIKLGNLVPDQLVIELVKERIIQYDCSKGFLLDGFPRTLTQAYAMEVAGINVDIVLILRIPDKIIINRIVGRMVHEPSGRIYHVTFNPPKQKGKDDITGENLIIRQDDKEDTVRHRLIGYHQQMIPIITYYNNANIRNIRCFTIDANCPISTLNEKIVRILG.

Position 10–15 (10–15) interacts with ATP; it reads GSGKGT. Residues 30-59 form an NMP region; that stretch reads STGDMLRTTVNKESVLGKNIQAIIKLGNLV. Residues Thr-31, Arg-36, 57–59, 85–88, and Gln-92 contribute to the AMP site; these read NLV and GFPR. The segment at 122 to 159 is LID; sequence GRMVHEPSGRIYHVTFNPPKQKGKDDITGENLIIRQDD. Residues Arg-123 and 132 to 133 each bind ATP; that span reads IY. Residues Arg-156 and Arg-167 each coordinate AMP. Cys-199 lines the ATP pocket.

This sequence belongs to the adenylate kinase family. Monomer.

It localises to the cytoplasm. The enzyme catalyses AMP + ATP = 2 ADP. The protein operates within purine metabolism; AMP biosynthesis via salvage pathway; AMP from ADP: step 1/1. Functionally, catalyzes the reversible transfer of the terminal phosphate group between ATP and AMP. Plays an important role in cellular energy homeostasis and in adenine nucleotide metabolism. The protein is Adenylate kinase of Baumannia cicadellinicola subsp. Homalodisca coagulata.